The primary structure comprises 185 residues: UPF0397 protein AYWB_013 (185 aa).

A run of 5 helical transmembrane segments spans residues 13 to 33 (IGLS…PVGF), 42 to 62 (AFLA…VGLI), 69 to 89 (FFLF…IGFI), 109 to 129 (IVYF…FFAP), and 148 to 168 (FLIV…LMTI).

It belongs to the UPF0397 family.

Its subcellular location is the cell membrane. The chain is UPF0397 protein AYWB_013 from Aster yellows witches'-broom phytoplasma (strain AYWB).